A 220-amino-acid polypeptide reads, in one-letter code: Uracil-DNA glycosylase (220 aa).

Asp-65 (proton acceptor) is an active-site residue.

This sequence belongs to the uracil-DNA glycosylase (UDG) superfamily. UNG family.

It localises to the cytoplasm. It carries out the reaction Hydrolyzes single-stranded DNA or mismatched double-stranded DNA and polynucleotides, releasing free uracil.. Its function is as follows. Excises uracil residues from the DNA which can arise as a result of misincorporation of dUMP residues by DNA polymerase or due to deamination of cytosine. This chain is Uracil-DNA glycosylase, found in Phocaeicola vulgatus (strain ATCC 8482 / DSM 1447 / JCM 5826 / CCUG 4940 / NBRC 14291 / NCTC 11154) (Bacteroides vulgatus).